A 723-amino-acid polypeptide reads, in one-letter code: MAPYLQHFIAWFGKDSILSKLIQIFNPPSHSDSAKIIISDDDGRSPEPPGGEEILWRHSAPKSTQMWAFLQKVNKKYGYSLRTYQDLHHWSITHRGQFWGEAWDYCGIRHSRQYDEVVDEAAAMWPRPAWFRGARLNFAENLLFPKVPQAVSDEAIAVISVDEGGKRDFITWQDLRERVRRCQSGMRALKIQPSDRVAGYVANHSNALVAMLATASLGAIWTAVSPDTGVIGAVDRLVQIEPRLLFTDNAVIYNGRIHPVLTKTQEIITALPSLEAVVVMRTVAGVQEDLPSSPRSPAKRLTYNSFLAQGPETQKLEFVHMPAEHPLYILYSSGTTGPPKCIVHGAIGTLMQHKKEHMLQSDIQPGDRLCFVTTCMWMMWHWLVSGLASGATVVLYNGSPFYYAPSSHGTSAKDDLAMPKLVDELGITQFGASATYFSMLERRKHLPRSLTQGRLSLETLKAVYSTGSPLAPSTFRYIYQAFGSQVNLGSISGGTDIIADFGVPSPLQAVVAGEIQVIALGMAVQAWGPTGMDLSVTGEPGELVQFWGPSGASKYESSYFAKYPGVWAHGDHIQINPRTGGLIMLGRSDGTLNPKGVRFGSAEIYHVLQYHFAAQVEDALCVGRRRRQDTDEMVVLFVKMRQDQLWSLALAEAIRRTVREELSPRHVPELIIECPEIPVTANGKKVEVLVKRIVSGVEVPAAGGSGTVNADCLQWFQEWATQN.

The protein belongs to the ATP-dependent AMP-binding enzyme family.

Its pathway is secondary metabolite biosynthesis; terpenoid biosynthesis. Malonamoyl-CoA synthetase; part of the gene cluster that mediates the biosynthesis of viridicatumtoxin, a tetracycline-like fungal meroterpenoid with a unique, fused spirobicyclic ring system. The first step of the pathway is the production of the malonamoyl-CoA starter unit for the polyketide synthase vrtA. The aldolase vrtJ may be involved in the synthesis of the malonamate substrate for malonamoyl-CoA synthetase vrtB. The polyketide synthase vrtA then may utilize the malonamoyl-CoA starter unit, followed by sequential condensation of eight malonyl-CoA units to form the polyketide backbone. The cyclization of the last ring could be mediated by the lactamase-like protein vrtG. The proposed post-PKS tailoring steps are a hydroxylation at C5 catalyzed the cytochrome P450 monooxygenase vrtE, a hydroxylation at C12a catalyzed by VrtH and/or VrtI, and an O-methylation by the O-methyltransferase vrtF. VrtC is then proposed to catalyze the transfer of a geranyl group synthesized by vrtD to the aromatic C ring of the tetracyclic polyketide intermediate of viridicatumtoxin to yield previridicatumtoxin. Finally, the cytochrome P450 monooxygenase vrtK catalyzes the spirocyclization of the geranyl moiety of previridicatumtoxin to afford viridicatumtoxin. The sequence is that of Malonamoyl-CoA synthetase vrtB from Penicillium aethiopicum.